The sequence spans 233 residues: Segregation and condensation protein A (233 aa).

It belongs to the ScpA family. As to quaternary structure, component of a cohesin-like complex composed of ScpA, ScpB and the Smc homodimer, in which ScpA and ScpB bind to the head domain of Smc. The presence of the three proteins is required for the association of the complex with DNA.

Its subcellular location is the cytoplasm. Participates in chromosomal partition during cell division. May act via the formation of a condensin-like complex containing Smc and ScpB that pull DNA away from mid-cell into both cell halves. This chain is Segregation and condensation protein A, found in Streptococcus pyogenes serotype M1.